Consider the following 258-residue polypeptide: Small ribosomal subunit protein uS2 (258 aa).

This sequence belongs to the universal ribosomal protein uS2 family.

In Streptococcus suis (strain 05ZYH33), this protein is Small ribosomal subunit protein uS2.